The following is a 76-amino-acid chain: KANTR integral membrane protein (76 aa).

Residues M1–G25 form the signal peptide. Over L26–K34 the chain is Extracellular. Residues N35 to S55 traverse the membrane as a helical segment. At A56 to F76 the chain is on the cytoplasmic side.

The protein resides in the membrane. This chain is KANTR integral membrane protein, found in Mus musculus (Mouse).